A 426-amino-acid polypeptide reads, in one-letter code: Adenylosuccinate synthetase (426 aa).

Residues 11–17 (GDEGKGK) and 39–41 (GHT) contribute to the GTP site. D12 serves as the catalytic Proton acceptor. Residues D12 and G39 each contribute to the Mg(2+) site. Residues 12-15 (DEGK), 37-40 (NAGH), T130, R144, N226, T241, and R305 each bind IMP. The active-site Proton donor is H40. 301–307 (VTTGRKR) is a binding site for substrate. GTP is bound by residues R307, 333–335 (KLD), and 415–417 (GTG).

This sequence belongs to the adenylosuccinate synthetase family. Homodimer. Mg(2+) serves as cofactor.

It localises to the cytoplasm. It catalyses the reaction IMP + L-aspartate + GTP = N(6)-(1,2-dicarboxyethyl)-AMP + GDP + phosphate + 2 H(+). It participates in purine metabolism; AMP biosynthesis via de novo pathway; AMP from IMP: step 1/2. Functionally, plays an important role in the de novo pathway and in the salvage pathway of purine nucleotide biosynthesis. Catalyzes the first committed step in the biosynthesis of AMP from IMP. This is Adenylosuccinate synthetase from Meyerozyma guilliermondii (strain ATCC 6260 / CBS 566 / DSM 6381 / JCM 1539 / NBRC 10279 / NRRL Y-324) (Yeast).